We begin with the raw amino-acid sequence, 682 residues long: DNA-directed RNA polymerase subunit beta' (682 aa).

4 residues coordinate Zn(2+): cysteine 69, cysteine 71, cysteine 87, and cysteine 90. Residues aspartate 489, aspartate 491, and aspartate 493 each coordinate Mg(2+).

The protein belongs to the RNA polymerase beta' chain family. RpoC1 subfamily. As to quaternary structure, in plastids the minimal PEP RNA polymerase catalytic core is composed of four subunits: alpha, beta, beta', and beta''. When a (nuclear-encoded) sigma factor is associated with the core the holoenzyme is formed, which can initiate transcription. Mg(2+) is required as a cofactor. Requires Zn(2+) as cofactor.

The protein resides in the plastid. It localises to the chloroplast. The enzyme catalyses RNA(n) + a ribonucleoside 5'-triphosphate = RNA(n+1) + diphosphate. In terms of biological role, DNA-dependent RNA polymerase catalyzes the transcription of DNA into RNA using the four ribonucleoside triphosphates as substrates. This chain is DNA-directed RNA polymerase subunit beta', found in Platanus occidentalis (Sycamore).